The primary structure comprises 411 residues: MSQTQPFLARVANGSLVIQIIVGIVAGILLASVAPESAISVGFLGGLFVSALKAVAPILVFILVASSIANQKKGAHTNMKPIIMLYLFGTLMAALTAVVMSFLFPTTLTLVAGNATASPPEGIAEVLNTLLFKIVDNPVNALMSGNFIGILAWAIALGFALHQASDATKQVFHDMSNGVTSIVRFVIRLAPIGIFGLVANTFAETGFAALAGYAHLLAVLLGSMAVIALVVNPAIVFFKTKENPYPLVFRCIRESGITAFFTRSSAANIPVNMQLCKDLDLHEDTYSVSIPLGATINMAGAAITITVLTLAAVHTMGVEVDIATAVLLSVVAAVSACGASGVAGGSLLLIPLACSLFGIPNEVAMQVVAVGFIIGVIQDSAETALNSSTDVLFTAAACKAAEAKVASPNIA.

9 helical membrane passes run 14-34, 43-63, 82-102, 141-161, 192-212, 218-238, 290-310, 330-350, and 357-377; these read GSLV…ASVA, FLGG…VFIL, IIML…VMSF, ALMS…GFAL, IGIF…ALAG, AVLL…IVFF, IPLG…VLTL, VVAA…LLLI, and FGIP…IGVI.

The protein belongs to the dicarboxylate/amino acid:cation symporter (DAACS) (TC 2.A.23) family.

The protein localises to the cell inner membrane. It catalyses the reaction L-serine(in) + Na(+)(in) = L-serine(out) + Na(+)(out). It carries out the reaction L-threonine(in) + Na(+)(in) = L-threonine(out) + Na(+)(out). Functionally, involved in the import of serine and threonine into the cell, with the concomitant import of sodium (symport system). The polypeptide is Serine/threonine transporter SstT (Photobacterium profundum (strain SS9)).